We begin with the raw amino-acid sequence, 225 residues long: Peptidyl-tRNA hydrolase (225 aa).

A tRNA-binding site is contributed by Tyr14. His19 functions as the Proton acceptor in the catalytic mechanism. TRNA contacts are provided by Phe64, Asn66, and Asn112. Positions 184–225 (ALRMQPPKPEKPKPAAKAPEAQAPEAAPDARSALQKLADRFR) are disordered. Positions 198-210 (AAKAPEAQAPEAA) are enriched in low complexity.

It belongs to the PTH family. In terms of assembly, monomer.

The protein resides in the cytoplasm. The enzyme catalyses an N-acyl-L-alpha-aminoacyl-tRNA + H2O = an N-acyl-L-amino acid + a tRNA + H(+). Functionally, hydrolyzes ribosome-free peptidyl-tRNAs (with 1 or more amino acids incorporated), which drop off the ribosome during protein synthesis, or as a result of ribosome stalling. In terms of biological role, catalyzes the release of premature peptidyl moieties from peptidyl-tRNA molecules trapped in stalled 50S ribosomal subunits, and thus maintains levels of free tRNAs and 50S ribosomes. This Cereibacter sphaeroides (strain KD131 / KCTC 12085) (Rhodobacter sphaeroides) protein is Peptidyl-tRNA hydrolase.